The following is a 469-amino-acid chain: Lipase A (469 aa).

A signal peptide spans 1 to 22 (MMFLTQLVSALFLFFLGPISYG). The span at 40–51 (PSEDPFYQPPPG) shows a compositional bias: pro residues. Positions 40–59 (PSEDPFYQPPPGYEETEPGT) are disordered. The N-linked (GlcNAc...) asparagine glycan is linked to Asn111. A disulfide bridge links Cys129 with Cys304. Catalysis depends on charge relay system residues Ser217, Asp361, and His393. Residues Cys377 and Cys421 are joined by a disulfide bond.

This sequence belongs to the AB hydrolase superfamily. Lipase family. Class Lip subfamily. In terms of assembly, monomer.

It localises to the secreted. The enzyme catalyses a triacylglycerol + H2O = a diacylglycerol + a fatty acid + H(+). In terms of biological role, hydrolyzes triglycerides, with a preference for substrates with short-chain lengths (C4 to C8). The chain is Lipase A from Arthroderma benhamiae (strain ATCC MYA-4681 / CBS 112371) (Trichophyton mentagrophytes).